A 108-amino-acid polypeptide reads, in one-letter code: ATP synthase peripheral stalk subunit F6, mitochondrial (108 aa).

A mitochondrion-targeting transit peptide spans 1–32; that stretch reads MILQRLFRFSSVIRSAVSVHLRRNIGVTAVAF. N6-acetyllysine occurs at positions 41 and 46. A Phosphoserine modification is found at serine 65. Residue lysine 79 is modified to N6-acetyllysine. N6-acetyllysine; alternate occurs at positions 94 and 99. An N6-succinyllysine; alternate mark is found at lysine 94 and lysine 99. Lysine 105 carries the N6-acetyllysine modification.

This sequence belongs to the eukaryotic ATPase subunit F6 family. As to quaternary structure, component of the ATP synthase complex composed at least of ATP5F1A/subunit alpha, ATP5F1B/subunit beta, ATP5MC1/subunit c (homooctomer), MT-ATP6/subunit a, MT-ATP8/subunit 8, ATP5ME/subunit e, ATP5MF/subunit f, ATP5MG/subunit g, ATP5MK/subunit k, ATP5MJ/subunit j, ATP5F1C/subunit gamma, ATP5F1D/subunit delta, ATP5F1E/subunit epsilon, ATP5PF/subunit F6, ATP5PB/subunit b, ATP5PD/subunit d, ATP5PO/subunit OSCP. ATP synthase complex consists of a soluble F(1) head domain (subunits alpha(3) and beta(3)) - the catalytic core - and a membrane F(0) domain - the membrane proton channel (subunits c, a, 8, e, f, g, k and j). These two domains are linked by a central stalk (subunits gamma, delta, and epsilon) rotating inside the F1 region and a stationary peripheral stalk (subunits F6, b, d, and OSCP).

Its subcellular location is the mitochondrion. It is found in the mitochondrion inner membrane. Functionally, subunit F6, of the mitochondrial membrane ATP synthase complex (F(1)F(0) ATP synthase or Complex V) that produces ATP from ADP in the presence of a proton gradient across the membrane which is generated by electron transport complexes of the respiratory chain. ATP synthase complex consist of a soluble F(1) head domain - the catalytic core - and a membrane F(1) domain - the membrane proton channel. These two domains are linked by a central stalk rotating inside the F(1) region and a stationary peripheral stalk. During catalysis, ATP synthesis in the catalytic domain of F(1) is coupled via a rotary mechanism of the central stalk subunits to proton translocation. In vivo, can only synthesize ATP although its ATP hydrolase activity can be activated artificially in vitro. Part of the complex F(0) domain. Part of the complex F(0) domain and the peripheric stalk, which acts as a stator to hold the catalytic alpha(3)beta(3) subcomplex and subunit a/ATP6 static relative to the rotary elements. The chain is ATP synthase peripheral stalk subunit F6, mitochondrial from Homo sapiens (Human).